A 237-amino-acid polypeptide reads, in one-letter code: Large ribosomal subunit protein uL2 (237 aa).

Polar residues predominate over residues 1–11; sequence MGKRIISQNRG. Disordered stretches follow at residues 1–20 and 201–237; these read MGKRIISQNRGKGTPTYRAP and FGGGKHQHVGKPKTVSRNAPPGRKVGSIAARRTGVRR.

Belongs to the universal ribosomal protein uL2 family. As to quaternary structure, part of the 50S ribosomal subunit. Forms a bridge to the 30S subunit in the 70S ribosome.

Functionally, one of the primary rRNA binding proteins. Required for association of the 30S and 50S subunits to form the 70S ribosome, for tRNA binding and peptide bond formation. It has been suggested to have peptidyltransferase activity; this is somewhat controversial. Makes several contacts with the 16S rRNA in the 70S ribosome. This chain is Large ribosomal subunit protein uL2, found in Archaeoglobus fulgidus (strain ATCC 49558 / DSM 4304 / JCM 9628 / NBRC 100126 / VC-16).